A 755-amino-acid chain; its full sequence is Bacteriophytochrome (755 aa).

Residue cysteine 24 participates in a tetrapyrrole binding. In terms of domain architecture, PAS spans 26–94 (REPIHIPGSI…LQAALPPGCP (69 aa)). Positions 95–504 (DALQYRATLD…RDTLTGALGE (410 aa)) are chromophore binding domain. Residues 152–316 (NLRALAEVAT…YLGRLLSLQV (165 aa)) enclose the GAF domain. The Histidine kinase domain occupies 529–747 (VISHHMQEPV…TFRCWLPDAG (219 aa)). A Phosphohistidine; by autocatalysis modification is found at histidine 532.

The protein in the N-terminal section; belongs to the phytochrome family. In terms of processing, contains one covalently linked tetrapyrrole chromophore. Lacks the cysteine conserved in plant phytochromes (at the position of Met-259) that binds chromophore. An engineered sequence used for X-ray crystallography forms a thioether link to biliverdin through Cys-24. The natural sequence can bind phycocyanobilin and phytochromobilin in vitro, but the identity of the natural chromophore is unknown.

It catalyses the reaction ATP + protein L-histidine = ADP + protein N-phospho-L-histidine.. In terms of biological role, photoreceptor which exists in two forms that are reversibly interconvertible by light: the R form that absorbs maximally in the red region of the spectrum and the FR form that absorbs maximally in the far-red region. Also has a slight blue shift for the far-red maximum. Could also absorb green light. May participate in regulating pigment synthesis like the carotenoid deinoxanthin which could protect the bacterium from intense visible light. The polypeptide is Bacteriophytochrome (bphP) (Deinococcus radiodurans (strain ATCC 13939 / DSM 20539 / JCM 16871 / CCUG 27074 / LMG 4051 / NBRC 15346 / NCIMB 9279 / VKM B-1422 / R1)).